A 109-amino-acid polypeptide reads, in one-letter code: Large ribosomal subunit protein uL22 (109 aa).

This sequence belongs to the universal ribosomal protein uL22 family. Part of the 50S ribosomal subunit.

This protein binds specifically to 23S rRNA; its binding is stimulated by other ribosomal proteins, e.g. L4, L17, and L20. It is important during the early stages of 50S assembly. It makes multiple contacts with different domains of the 23S rRNA in the assembled 50S subunit and ribosome. Functionally, the globular domain of the protein is located near the polypeptide exit tunnel on the outside of the subunit, while an extended beta-hairpin is found that lines the wall of the exit tunnel in the center of the 70S ribosome. This Bordetella avium (strain 197N) protein is Large ribosomal subunit protein uL22.